The chain runs to 335 residues: MLLIGVAGTTLSAQEVDWLQDDAVAGVVLFKRNFASRAQIVELSAALREAAPRPLLLAVDQEGGRVQRFYEGYSALPPLQGIGALYVRDPEAALELAFEHAWLMASEVRASGVDLSFAPVVDLGRGNRAIGDRAFSDDPHVVAAFAQAYVQGMHAAGMPVTLKHFPGHGSVLEDTHVDLAVDVRPLETLESEDLVPFAAGIAAGADAVMMAHVVYPNVAPETAGFSAHWIEVILRGRMGFRGVVFSDDIGMAAVRGVGGVVGCVHAHLDAGCDVVLVCHPELVNDALSAVAGRRSNTAALIGLIGRGALGWDGLLADVRYGSIQSRLFERFGTST.

Residues Asp-60, Arg-68, Arg-133, and 163 to 164 (KH) contribute to the substrate site. The active-site Proton donor/acceptor is His-176. Asp-247 serves as the catalytic Nucleophile.

Belongs to the glycosyl hydrolase 3 family. NagZ subfamily.

The protein resides in the cytoplasm. It catalyses the reaction Hydrolysis of terminal non-reducing N-acetyl-D-hexosamine residues in N-acetyl-beta-D-hexosaminides.. It participates in cell wall biogenesis; peptidoglycan recycling. Plays a role in peptidoglycan recycling by cleaving the terminal beta-1,4-linked N-acetylglucosamine (GlcNAc) from peptide-linked peptidoglycan fragments, giving rise to free GlcNAc, anhydro-N-acetylmuramic acid and anhydro-N-acetylmuramic acid-linked peptides. This chain is Beta-hexosaminidase, found in Xylella fastidiosa (strain M12).